The primary structure comprises 85 residues: Large ribosomal subunit protein bL27 (85 aa).

A disordered region spans residues 1-22; the sequence is MAKTKAGGSTRNGRDSKGRRLG.

Belongs to the bacterial ribosomal protein bL27 family.

The polypeptide is Large ribosomal subunit protein bL27 (Mycoplasmopsis pulmonis (strain UAB CTIP) (Mycoplasma pulmonis)).